The sequence spans 108 residues: UPF0060 membrane protein Nwi_1459 (108 aa).

The next 4 membrane-spanning stretches (helical) occupy residues 5–25 (AAYV…WAWL), 31–51 (VWWL…LTLV), 61–81 (AAYG…VEGI), and 88–108 (LAGA…PHEI).

It belongs to the UPF0060 family.

Its subcellular location is the cell inner membrane. The protein is UPF0060 membrane protein Nwi_1459 of Nitrobacter winogradskyi (strain ATCC 25391 / DSM 10237 / CIP 104748 / NCIMB 11846 / Nb-255).